A 435-amino-acid polypeptide reads, in one-letter code: Adenylosuccinate synthetase (435 aa).

Residues 22-28 and 50-52 contribute to the GTP site; these read GDEGKGK and GHT. D23 serves as the catalytic Proton acceptor. Mg(2+) contacts are provided by D23 and G50. IMP-binding positions include 23–26, 48–51, T140, R154, Q235, T250, and R314; these read DEGK and NAGH. The active-site Proton donor is the H51. Residue 310–316 coordinates substrate; it reads ATTGRKR. GTP-binding positions include R316, 342-344, and 424-426; these read KLD and SVG.

Belongs to the adenylosuccinate synthetase family. As to quaternary structure, homodimer. It depends on Mg(2+) as a cofactor.

It is found in the cytoplasm. It catalyses the reaction IMP + L-aspartate + GTP = N(6)-(1,2-dicarboxyethyl)-AMP + GDP + phosphate + 2 H(+). The protein operates within purine metabolism; AMP biosynthesis via de novo pathway; AMP from IMP: step 1/2. Functionally, plays an important role in the de novo pathway of purine nucleotide biosynthesis. Catalyzes the first committed step in the biosynthesis of AMP from IMP. In Chlorobaculum parvum (strain DSM 263 / NCIMB 8327) (Chlorobium vibrioforme subsp. thiosulfatophilum), this protein is Adenylosuccinate synthetase.